The following is a 195-amino-acid chain: Endoribonuclease YbeY (195 aa).

Zn(2+) contacts are provided by H152, H156, and H162.

This sequence belongs to the endoribonuclease YbeY family. Zn(2+) is required as a cofactor.

Its subcellular location is the cytoplasm. Functionally, single strand-specific metallo-endoribonuclease involved in late-stage 70S ribosome quality control and in maturation of the 3' terminus of the 16S rRNA. This Rhodopseudomonas palustris (strain BisB5) protein is Endoribonuclease YbeY.